A 134-amino-acid polypeptide reads, in one-letter code: Profilin-3 (134 aa).

The cysteines at positions 13 and 118 are disulfide-linked. Residues 84–100 (AVIRGKKGSGGITIKKT) carry the Involved in PIP2 interaction motif. The residue at position 114 (threonine 114) is a Phosphothreonine.

This sequence belongs to the profilin family. In terms of assembly, occurs in many kinds of cells as a complex with monomeric actin in a 1:1 ratio. In terms of processing, phosphorylated by MAP kinases.

It is found in the cytoplasm. The protein localises to the cytoskeleton. In terms of biological role, binds to actin and affects the structure of the cytoskeleton. At high concentrations, profilin prevents the polymerization of actin, whereas it enhances it at low concentrations. In Olea europaea (Common olive), this protein is Profilin-3.